The chain runs to 356 residues: Alanine racemase, catabolic (356 aa).

Catalysis depends on Lys35, which acts as the Proton acceptor; specific for D-alanine. N6-(pyridoxal phosphate)lysine is present on Lys35. Residue Arg130 participates in substrate binding. The active-site Proton acceptor; specific for L-alanine is the Tyr253. Met301 contributes to the substrate binding site.

The protein belongs to the alanine racemase family. Pyridoxal 5'-phosphate is required as a cofactor.

It catalyses the reaction L-alanine = D-alanine. Functionally, isomerizes L-alanine to D-alanine which is then oxidized to pyruvate by DadA. This chain is Alanine racemase, catabolic (dadX), found in Escherichia coli O157:H7.